Consider the following 237-residue polypeptide: LexA repressor (237 aa).

A DNA-binding region (H-T-H motif) is located at residues 26-46 (FDEMKIALELTSKSGIHRLIT). Residues S158 and K196 each act as for autocatalytic cleavage activity in the active site.

It belongs to the peptidase S24 family. As to quaternary structure, homodimer.

It carries out the reaction Hydrolysis of Ala-|-Gly bond in repressor LexA.. In terms of biological role, represses a number of genes involved in the response to DNA damage (SOS response), including recA and lexA. In the presence of single-stranded DNA, RecA interacts with LexA causing an autocatalytic cleavage which disrupts the DNA-binding part of LexA, leading to derepression of the SOS regulon and eventually DNA repair. This Bartonella quintana (strain Toulouse) (Rochalimaea quintana) protein is LexA repressor.